We begin with the raw amino-acid sequence, 412 residues long: Divalent metal cation transporter MntH (412 aa).

The next 11 helical transmembrane spans lie at 19–39, 46–66, 94–114, 122–142, 155–175, 196–216, 241–261, 290–310, 329–349, 350–370, and 389–409; these read FALM…GNFA, ASFG…AMLI, VWFY…AEFI, LILG…TFLI, LVIG…LVFS, AVFL…IYLH, IAMT…AAAF, IFGL…TLAG, SVTM…TRIL, VMSQ…LLIF, and IGWM…IGTL.

This sequence belongs to the NRAMP family.

The protein resides in the cell inner membrane. H(+)-stimulated, divalent metal cation uptake system. The protein is Divalent metal cation transporter MntH of Enterobacter sp. (strain 638).